The primary structure comprises 166 residues: Putative pre-16S rRNA nuclease (166 aa).

The protein belongs to the YqgF nuclease family.

Its subcellular location is the cytoplasm. In terms of biological role, could be a nuclease involved in processing of the 5'-end of pre-16S rRNA. The sequence is that of Putative pre-16S rRNA nuclease from Mesorhizobium japonicum (strain LMG 29417 / CECT 9101 / MAFF 303099) (Mesorhizobium loti (strain MAFF 303099)).